Consider the following 249-residue polypeptide: uncharacterized protein (249 aa).

This sequence belongs to the ycf23 family.

The protein localises to the plastid. It localises to the chloroplast. This is an uncharacterized protein from Cyanidium caldarium (Red alga).